Consider the following 570-residue polypeptide: High-affinity hexose transporter HXT6 (570 aa).

The Cytoplasmic segment spans residues 1 to 60; it reads MSQDAAIAEQTPVEHLSAVDSASHSVLSTPSNKAERDEIKAYGEGEEHEPVVEIPKRPAS. The chain crosses the membrane as a helical span at residues 61 to 81; that stretch reads AYVTVSIMCIMIAFGGFVFGW. At 82–116 the chain is on the extracellular side; sequence DTGTISGFINQTDFIRRFGMKHKDGTNYLSKVRTG. Asn-91 carries N-linked (GlcNAc...) asparagine glycosylation. Residues 117–137 traverse the membrane as a helical segment; sequence LIVSIFNIGCAIGGIILSKLG. The Cytoplasmic segment spans residues 138–143; it reads DMYGRK. Residues 144 to 164 form a helical membrane-spanning segment; that stretch reads VGLIVVVVIYIIGIIIQIASI. The Extracellular portion of the chain corresponds to 165–174; sequence NKWYQYFIGR. The chain crosses the membrane as a helical span at residues 175-195; the sequence is IISGLGVGGIAVLSPMLISEV. At 196-201 the chain is on the cytoplasmic side; the sequence is SPKHLR. Residues 202 to 222 traverse the membrane as a helical segment; that stretch reads GTLVSCYQLMITAGIFLGYCT. The Extracellular portion of the chain corresponds to 223 to 236; it reads NFGTKNYSNSVQWR. Asn-228 carries an N-linked (GlcNAc...) asparagine glycan. A helical transmembrane segment spans residues 237–257; that stretch reads VPLGLCFAWALFMIGGMTFVP. Residues 258–340 lie on the Cytoplasmic side of the membrane; it reads ESPRYLAEVG…IQSLQQLTGD (83 aa). The helical transmembrane segment at 341–357 threads the bilayer; the sequence is NYFFYYGTTIFKAVGLS. At 358–363 the chain is on the extracellular side; it reads DSFETS. Residues 364-381 form a helical membrane-spanning segment; sequence IVLGIVNFASTFVGIYVV. Residues 382–388 are Cytoplasmic-facing; that stretch reads ERYGRRT. The helical transmembrane segment at 389–409 threads the bilayer; the sequence is CLLWGAASMTACMVVYASVGV. Residues 410-431 lie on the Extracellular side of the membrane; that stretch reads TRLWPNGQDQPSSKGAGNCMIV. Residues 432 to 452 form a helical membrane-spanning segment; sequence FACFYIFCFATTWAPIPYVVV. Over 453–469 the chain is Cytoplasmic; the sequence is SETFPLRVKSKAMSIAT. A helical membrane pass occupies residues 470 to 490; it reads AANWLWGFLIGFFTPFITGAI. A topological domain (extracellular) is located at residue Asn-491. The chain crosses the membrane as a helical span at residues 492 to 512; sequence FYYGYVFMGCLVFMFFYVLLV. Residues 513–570 lie on the Cytoplasmic side of the membrane; the sequence is VPETKGLTLEEVNTMWEEGVLPWKSASWVPPSRRGANYDAEEMAHDDKPLYKRMFSTK. Lys-560 participates in a covalent cross-link: Glycyl lysine isopeptide (Lys-Gly) (interchain with G-Cter in ubiquitin).

The protein belongs to the major facilitator superfamily. Sugar transporter (TC 2.A.1.1) family.

Its subcellular location is the membrane. Functionally, high-affinity glucose transporter. This is High-affinity hexose transporter HXT6 (HXT6) from Saccharomyces cerevisiae (strain ATCC 204508 / S288c) (Baker's yeast).